Consider the following 191-residue polypeptide: Calcium-binding protein CML42 (191 aa).

EF-hand domains follow at residues 25-60 (LNAL…LGLN), 116-151 (ENES…LGLP), and 154-189 (GEME…VVIP). Residues Asp38, Asn40, Asp42, Glu49, Asp129, Asn131, Asp133, Glu140, Asp167, Asn169, Asp171, Arg173, and Glu178 each coordinate Ca(2+).

Interacts with KIC. As to expression, expressed in seedling shoots, roots, rosette leaves and flowers. Expressed in the leaf trichome support cells.

Probable calcium sensor that binds calcium in vitro. Involved in the regulation of trichome branching. The sequence is that of Calcium-binding protein CML42 (CML42) from Arabidopsis thaliana (Mouse-ear cress).